The chain runs to 239 residues: Ribosomal RNA small subunit methyltransferase G (239 aa).

S-adenosyl-L-methionine contacts are provided by residues Gly80, Phe85, 103-105, 131-132, and Arg150; these read EAS and AE.

It belongs to the methyltransferase superfamily. RNA methyltransferase RsmG family.

It localises to the cytoplasm. In terms of biological role, specifically methylates the N7 position of a guanine in 16S rRNA. The sequence is that of Ribosomal RNA small subunit methyltransferase G from Caldanaerobacter subterraneus subsp. tengcongensis (strain DSM 15242 / JCM 11007 / NBRC 100824 / MB4) (Thermoanaerobacter tengcongensis).